A 156-amino-acid chain; its full sequence is Cell division protein SepF (156 aa).

The segment at 30–49 (NAAAPSTTETSVVRQDDRPK) is disordered.

It belongs to the SepF family. In terms of assembly, homodimer. Interacts with FtsZ.

The protein resides in the cytoplasm. Cell division protein that is part of the divisome complex and is recruited early to the Z-ring. Probably stimulates Z-ring formation, perhaps through the cross-linking of FtsZ protofilaments. Its function overlaps with FtsA. The protein is Cell division protein SepF of Exiguobacterium sp. (strain ATCC BAA-1283 / AT1b).